The chain runs to 283 residues: Quinate/shikimate dehydrogenase (NAD(+)) (283 aa).

Residues Ser-17, Thr-69, Lys-73, Asn-94, and Asp-110 each coordinate shikimate. L-quinate is bound by residues 17–19 (SRT), Thr-69, Lys-73, Asn-94, and Asp-110. Lys-73 serves as the catalytic Proton acceptor. NAD(+) is bound by residues 137 to 138 (GV), Asp-158, Arg-163, 203 to 206 (PMGM), Ala-213, Val-228, and Gly-251. A shikimate-binding site is contributed by Gln-258. Gln-258 provides a ligand contact to L-quinate.

This sequence belongs to the shikimate dehydrogenase family. Homodimer.

It carries out the reaction L-quinate + NAD(+) = 3-dehydroquinate + NADH + H(+). The enzyme catalyses shikimate + NAD(+) = 3-dehydroshikimate + NADH + H(+). Its pathway is metabolic intermediate biosynthesis; chorismate biosynthesis; chorismate from D-erythrose 4-phosphate and phosphoenolpyruvate: step 4/7. The protein operates within aromatic compound metabolism; 3,4-dihydroxybenzoate biosynthesis; 3-dehydroquinate from D-quinate (NAD(+) route). In terms of biological role, involved in the biosynthesis of the chorismate, which leads to the biosynthesis of aromatic amino acids, and plays a key role in the quinate degradation pathway. Catalyzes the NAD(+)-dependent oxidation of both quinate and shikimate to 3-dehydroquinate and 3-dehydroshikimate, respectively. This is Quinate/shikimate dehydrogenase (NAD(+)) from Corynebacterium glutamicum (strain R).